The sequence spans 244 residues: LexA repressor (244 aa).

The disordered stretch occupies residues 1–24 (MSDSSDTTVDGASDGASDGASGAD). Positions 10 to 24 (DGASDGASDGASGAD) are enriched in low complexity. The segment at residues 58-78 (IREIGDAVGLTSTSSVAHQLR) is a DNA-binding region (H-T-H motif). Active-site for autocatalytic cleavage activity residues include S168 and K205.

It belongs to the peptidase S24 family. In terms of assembly, homodimer.

The enzyme catalyses Hydrolysis of Ala-|-Gly bond in repressor LexA.. Functionally, represses a number of genes involved in the response to DNA damage (SOS response), including recA and lexA. In the presence of single-stranded DNA, RecA interacts with LexA causing an autocatalytic cleavage which disrupts the DNA-binding part of LexA, leading to derepression of the SOS regulon and eventually DNA repair. This is LexA repressor from Mycobacterium marinum (strain ATCC BAA-535 / M).